A 266-amino-acid polypeptide reads, in one-letter code: MSRIAETFARLRAAGRIALMPYLTVGFPERTSTLELVPALEAAGASLFELGIPFSDPLADGTTIQRATQRALENGITIADCIATVAELRARRVAAPLLLMGYYNPLLRYGLERACAALAAAGGDGWIIPDLPLEEADDLRQLAAAHQLDLIMFIAPTTPPARISQITAQASGFLYIVSLTGVTGARQTLAGNLTDLIANVRQQTNLPLVVGFGISQPAHIAEVARIADGAIVGSALIDRLERLPPEDRVSGAAAYIRELLSAVARP.

Residues Glu-49 and Asp-60 each act as proton acceptor in the active site.

Belongs to the TrpA family. In terms of assembly, tetramer of two alpha and two beta chains.

It carries out the reaction (1S,2R)-1-C-(indol-3-yl)glycerol 3-phosphate + L-serine = D-glyceraldehyde 3-phosphate + L-tryptophan + H2O. It functions in the pathway amino-acid biosynthesis; L-tryptophan biosynthesis; L-tryptophan from chorismate: step 5/5. The alpha subunit is responsible for the aldol cleavage of indoleglycerol phosphate to indole and glyceraldehyde 3-phosphate. The sequence is that of Tryptophan synthase alpha chain from Chloroflexus aurantiacus (strain ATCC 29364 / DSM 637 / Y-400-fl).